A 418-amino-acid polypeptide reads, in one-letter code: MTYLEIDGVEKLSGEVIISGAKNAALPLIASSILAKNEAQISNLPNVADICTLLSLLKNLGASYTFENNFAKINTKDLNKTIAKYDIVRKMRASILTLGPLLARFGNCEVSLPGGCAIGQRPIDLHLLALEKMGANIEIKQGYVVASGKLKGADLMFDKITVTGSENIIMAAALAHGKTRLLNVAKEPEVVQLCEVLAEAGLDIKGVGSDELEIYGTSGELLEFKPFKIIPDRIEAGTYLCAGAITNSKITLKNVNANHLGAVLAKLEQMGFSFDISEDSISINPAKEIKPVEILTSEYPGFPTDMQAQFMALALRANGVSIIDERLFENRFMHVSELLRMGADIRLNGHIATINGTKELFGADVMATDLRASSALILAALAAKGTSKIHRIYHLDRGYENLEEKFKNLGASIRRLEE.

Phosphoenolpyruvate is bound at residue 22–23 (KN). Position 92 (R92) interacts with UDP-N-acetyl-alpha-D-glucosamine. C116 serves as the catalytic Proton donor. At C116 the chain carries 2-(S-cysteinyl)pyruvic acid O-phosphothioketal. UDP-N-acetyl-alpha-D-glucosamine is bound by residues 121 to 125 (RPIDL), D305, and L327.

The protein belongs to the EPSP synthase family. MurA subfamily.

It is found in the cytoplasm. It catalyses the reaction phosphoenolpyruvate + UDP-N-acetyl-alpha-D-glucosamine = UDP-N-acetyl-3-O-(1-carboxyvinyl)-alpha-D-glucosamine + phosphate. It participates in cell wall biogenesis; peptidoglycan biosynthesis. Its function is as follows. Cell wall formation. Adds enolpyruvyl to UDP-N-acetylglucosamine. In Campylobacter lari (strain RM2100 / D67 / ATCC BAA-1060), this protein is UDP-N-acetylglucosamine 1-carboxyvinyltransferase.